Here is a 427-residue protein sequence, read N- to C-terminus: Gamma-glutamyl phosphate reductase (427 aa).

The protein belongs to the gamma-glutamyl phosphate reductase family.

Its subcellular location is the cytoplasm. The catalysed reaction is L-glutamate 5-semialdehyde + phosphate + NADP(+) = L-glutamyl 5-phosphate + NADPH + H(+). It participates in amino-acid biosynthesis; L-proline biosynthesis; L-glutamate 5-semialdehyde from L-glutamate: step 2/2. Catalyzes the NADPH-dependent reduction of L-glutamate 5-phosphate into L-glutamate 5-semialdehyde and phosphate. The product spontaneously undergoes cyclization to form 1-pyrroline-5-carboxylate. The polypeptide is Gamma-glutamyl phosphate reductase (Rhodospirillum rubrum (strain ATCC 11170 / ATH 1.1.1 / DSM 467 / LMG 4362 / NCIMB 8255 / S1)).